The following is a 37-amino-acid chain: Large ribosomal subunit protein bL36 (37 aa).

Belongs to the bacterial ribosomal protein bL36 family.

This Hydrogenobaculum sp. (strain Y04AAS1) protein is Large ribosomal subunit protein bL36.